Here is a 3132-residue protein sequence, read N- to C-terminus: Toxin CdiA (3132 aa).

The segment at residues 1-32 (MHQPPVRFTYRLLSYLVSAIIAGQPLLPAVGA) is a signal peptide (signal). Positions 36–322 (PQNGAGMDKA…AGGNLSVTGT (287 aa)) are two-partner system transport domain (TPS). Residues 351–1378 (GELTAGQNAM…ITMNTAHLLN (1028 aa)) are FHA-1. Positions 1379–1635 (SWDAISASHE…LSLSGASVSS (257 aa)) are receptor-binding domain (RBD). The YP domain stretch occupies residues 1636 to 1820 (YPLPSGNNGY…LSPEDITLHN (185 aa)). Residues 1821–1859 (GSVISGNNVQLAGGNITNSGSSINAQNDLLLDRTGSIDN) form a periplasmic FHA-1 repeat (pFR) region. Positions 1930 to 2526 (RATDSLFMGA…QDSDRYDSRQ (597 aa)) are FHA-2. Disordered regions lie at residues 2195 to 2228 (TGTGGIGFTTGSSKTTHDRREAGTTQSQSASTIG) and 2456 to 2497 (AGIN…SGAQ). 2 stretches are compositionally biased toward polar residues: residues 2217-2228 (GTTQSQSASTIG) and 2483-2497 (VSLTSGRDTTLSGAQ). The tract at residues 2862–2904 (DNLSEQERQQISMLATIASGIAGGLVGNSTSAAGTGAQAGRNS) is pre-toxin (PT) domain. The VENN CT cleavage motif motif lies at 2905-2908 (VENN). Residues 2909 to 3121 (AMSGLEGFGT…IGTVTDYQIE (213 aa)) form a C-terminal effector domain (CT) region.

The protein in the N-terminal section; belongs to the CdiA toxin family. In terms of assembly, probably interacts with cognate immunity protein CdiI. In terms of processing, expressed as 303 kDa protein which can be processed to 284 kDa and 195 kDa forms.

Its subcellular location is the secreted. The protein resides in the target cell. The protein localises to the target cell cytoplasm. In terms of biological role, toxic component of a toxin-immunity protein module, which functions as a cellular contact-dependent growth inhibition (CDI) system. CDI modules allow bacteria to communicate with and inhibit the growth of closely related neighboring bacteria (target cell counts decrease 1000- to 10(5)-fold) in a contact-dependent fashion. Inhibitory cells must be in logarithmic (not stationary) phase to inhibit growth of their targets, but protein synthesis is not necessary. The presence of P or S but not type 1 pili protects the target cells against growth inhibition for this CDI. BamA on the outer membrane of target cells acts as a receptor for CdiA, while target cell multidrug efflux pump AcrB facilitates its transport into the cytoplasm. Outer membrane receptor function is dependent on extracellular loops of BamA. Cells undergoing CDI show a 2- to 5-fold reversible decrease in aerobic respiration, proton motive force and steady-state ATP levels, suggesting this CT module is an ionophore that disrupts the target cell's inner cell membrane. Growth recovery requires an energy source. Cells expressing this protein in the absence of CdiI initially form filaments, some of which contain multiple nucleoids, while others are devoid of nucleoids. CDI cells induce the phage shock response, but pspA is not required for recovery from CDI. CDI is neutralized by its cognate immunity protein CdiI, but not by non-cognate CdiI from other bacteria with different CDI systems. Plays a role in biofilm formation, a region N-terminal to residue 644 is implicated in this receptor-independent cell adhesion. Its function is as follows. The CdiA protein is thought to be exported from the cell through the central lumen of CdiB, the other half of its two-partner system (TPS). The TPS domain probably remains associated with CdiB while the FHA-1 domain forms an extended filament (33 nm long) with the receptor-binding domain (RBD) at its extremity; in the secretion arrested state the C-terminus of the RBD and YP domains form a hairpin-like structure as the FHA-2, PT and CT domains are periplasmic. The YP domain is probably responsible for this arrest at the point where it re-enters the host cell periplasm. Upon binding to a target cell outer membrane receptor (BamA for this CDI) a signal is transmitted to activate secretion. The filament becomes about 5 nm longer, the rest of CdiA is secreted and the FHA-2 domain becomes stably associated with the target cell's outer membrane where it facilitates entry of the toxic CT domain into the target cell periplasm. From there the toxic CT domain is cleaved and gains access to the target cell cytoplasm via an inner membrane protein (multidrug efflux pump AcrB for this CDI). In Escherichia coli, this protein is Toxin CdiA.